The sequence spans 54 residues: Large ribosomal subunit protein eL37 (54 aa).

Zn(2+) is bound by residues Cys-20, Cys-23, Cys-35, and Cys-38. The C4-type zinc-finger motif lies at 20 to 38 (CRRCGHHTYNVRTKRCSHC).

Belongs to the eukaryotic ribosomal protein eL37 family. Zn(2+) is required as a cofactor.

Its function is as follows. Binds to the 23S rRNA. The sequence is that of Large ribosomal subunit protein eL37 (rpl37e) from Thermoplasma volcanium (strain ATCC 51530 / DSM 4299 / JCM 9571 / NBRC 15438 / GSS1).